A 138-amino-acid chain; its full sequence is Pleckstrin homology-like domain family A member 2 (138 aa).

The region spanning 11–105 is the PH domain; that stretch reads VLKEGELEKR…WNAVITMALI (95 aa). Positions 117 to 138 are disordered; it reads KTRQDDESGSPGQHESRMARAP.

Belongs to the PHLDA2 family.

Its subcellular location is the cytoplasm. It localises to the membrane. Functionally, plays a role in regulating placenta growth. May act via its PH domain that competes with other PH domain-containing proteins, thereby preventing their binding to membrane lipids. The polypeptide is Pleckstrin homology-like domain family A member 2 (phlda2) (Salmo salar (Atlantic salmon)).